Here is a 347-residue protein sequence, read N- to C-terminus: 3-isopropylmalate dehydrogenase (347 aa).

The substrate site is built by R94, R104, R128, and D219. Mg(2+) contacts are provided by D219, D243, and D247. 279-291 (GSAPDIAGQGKAD) contributes to the NAD(+) binding site.

It belongs to the isocitrate and isopropylmalate dehydrogenases family. LeuB type 2 subfamily. Homodimer. It depends on Mg(2+) as a cofactor. Mn(2+) serves as cofactor.

It localises to the cytoplasm. The catalysed reaction is (2R,3S)-3-isopropylmalate + NAD(+) = 4-methyl-2-oxopentanoate + CO2 + NADH. It participates in amino-acid biosynthesis; L-leucine biosynthesis; L-leucine from 3-methyl-2-oxobutanoate: step 3/4. Functionally, catalyzes the oxidation of 3-carboxy-2-hydroxy-4-methylpentanoate (3-isopropylmalate) to 3-carboxy-4-methyl-2-oxopentanoate. The product decarboxylates to 4-methyl-2 oxopentanoate. The protein is 3-isopropylmalate dehydrogenase of Streptomyces griseus subsp. griseus (strain JCM 4626 / CBS 651.72 / NBRC 13350 / KCC S-0626 / ISP 5235).